The sequence spans 395 residues: Tryptophan synthase beta chain (395 aa).

Residue Lys-86 is modified to N6-(pyridoxal phosphate)lysine.

This sequence belongs to the TrpB family. Tetramer of two alpha and two beta chains. The cofactor is pyridoxal 5'-phosphate.

It catalyses the reaction (1S,2R)-1-C-(indol-3-yl)glycerol 3-phosphate + L-serine = D-glyceraldehyde 3-phosphate + L-tryptophan + H2O. The protein operates within amino-acid biosynthesis; L-tryptophan biosynthesis; L-tryptophan from chorismate: step 5/5. Functionally, the beta subunit is responsible for the synthesis of L-tryptophan from indole and L-serine. In Psychromonas ingrahamii (strain DSM 17664 / CCUG 51855 / 37), this protein is Tryptophan synthase beta chain.